Consider the following 617-residue polypeptide: UvrABC system protein C (617 aa).

The 80-residue stretch at 12-91 (EKPGVYLMKD…IKKYKPKYNV (80 aa)) folds into the GIY-YIG domain. Residues 203–238 (EWLVEKLKEEMQKAADELRFEEAARLRDQIFAIEKI) form the UVR domain.

The protein belongs to the UvrC family. As to quaternary structure, interacts with UvrB in an incision complex.

The protein resides in the cytoplasm. In terms of biological role, the UvrABC repair system catalyzes the recognition and processing of DNA lesions. UvrC both incises the 5' and 3' sides of the lesion. The N-terminal half is responsible for the 3' incision and the C-terminal half is responsible for the 5' incision. This chain is UvrABC system protein C, found in Caldanaerobacter subterraneus subsp. tengcongensis (strain DSM 15242 / JCM 11007 / NBRC 100824 / MB4) (Thermoanaerobacter tengcongensis).